The sequence spans 207 residues: Superoxide dismutase [Mn] (207 aa).

Histidine 27, histidine 82, aspartate 169, and histidine 173 together coordinate Mn(2+).

It belongs to the iron/manganese superoxide dismutase family. Requires Mn(2+) as cofactor.

It catalyses the reaction 2 superoxide + 2 H(+) = H2O2 + O2. In terms of biological role, destroys superoxide anion radicals which are normally produced within the cells and which are toxic to biological systems. This Yersinia enterocolitica protein is Superoxide dismutase [Mn] (sodA).